The primary structure comprises 204 residues: Proteasome subunit beta type-3 (204 aa).

This sequence belongs to the peptidase T1B family. The 26S proteasome consists of a 20S proteasome core and two 19S regulatory subunits. The 20S proteasome core is composed of 28 subunits that are arranged in four stacked rings, resulting in a barrel-shaped structure. The two end rings are each formed by seven alpha subunits, and the two central rings are each formed by seven beta subunits. The catalytic chamber with the active sites is on the inside of the barrel.

It is found in the cytoplasm. Its subcellular location is the nucleus. Non-catalytic component of the proteasome, a multicatalytic proteinase complex which is characterized by its ability to cleave peptides with Arg, Phe, Tyr, Leu, and Glu adjacent to the leaving group at neutral or slightly basic pH. The proteasome has an ATP-dependent proteolytic activity. The polypeptide is Proteasome subunit beta type-3 (PBC1) (Picea mariana (Black spruce)).